A 1450-amino-acid polypeptide reads, in one-letter code: Inactive serine/threonine-protein kinase TEX14 (1450 aa).

ANK repeat units lie at residues Leu-27 to Thr-54, Gln-55 to His-84, and Asp-88 to Leu-117. 2 positions are modified to phosphoserine: Ser-175 and Ser-186. Residues Ile-199–Ile-512 enclose the Protein kinase domain. ATP contacts are provided by residues Ile-205–Phe-213 and Lys-267. Ser-431 bears the Phosphoserine; by PLK1 mark. Phosphoserine occurs at positions 561 and 662. A disordered region spans residues Ser-700 to Ser-720. The short motif at Gly-791–Tyr-797 is the GPPX3Y element. Disordered regions lie at residues Val-852–Val-906, Pro-947–Glu-977, Asp-992–Lys-1012, and Gln-1035–Ile-1062. Polar residues-rich tracts occupy residues Lys-875 to Gln-886 and Lys-894 to Val-906. Residues Arg-889–Asn-897 carry the D-box motif. The segment covering Asp-992–Asn-1011 has biased composition (basic and acidic residues). Over residues Gln-1038–Pro-1061 the composition is skewed to polar residues. 2 positions are modified to phosphoserine: Ser-1060 and Ser-1221. Disordered regions lie at residues Thr-1261 to Leu-1282 and Lys-1300 to Thr-1418. Polar residues-rich tracts occupy residues Lys-1300 to Glu-1311 and Thr-1332 to Arg-1344. Phosphoserine is present on residues Ser-1357 and Ser-1358. 2 stretches are compositionally biased toward basic and acidic residues: residues Ser-1383–Gln-1397 and Ser-1404–Asp-1413. Residues Ser-1412 and Ser-1449 each carry the phosphoserine modification.

It belongs to the protein kinase superfamily. In terms of assembly, interacts with KIF23 and RBM44. Interacts with CEP55; inhibiting interaction between CEP55 and PDCD6IP/ALIX and TSG101. Phosphorylated on Thr residues by CDK1 during early phases of mitosis, promoting the interaction with PLK1 and recruitment to kinetochores. Phosphorylated on Ser-431 by PLK1 during late prometaphase promotes the rapid depletion from kinetochores and its subsequent degradation by the APC/C complex. In terms of tissue distribution, detected in testis and spermatogonia. Not detectable in the other tissues tested.

It is found in the cytoplasm. Its subcellular location is the midbody. The protein resides in the chromosome. The protein localises to the centromere. It localises to the kinetochore. In terms of biological role, required both for the formation of intercellular bridges during meiosis and for kinetochore-microtubule attachment during mitosis. Intercellular bridges are evolutionarily conserved structures that connect differentiating germ cells and are required for spermatogenesis and male fertility. Acts by promoting the conversion of midbodies into intercellular bridges via its interaction with CEP55: interaction with CEP55 inhibits the interaction between CEP55 and PDCD6IP/ALIX and TSG101, blocking cell abscission and leading to transform midbodies into intercellular bridges. Also plays a role during mitosis: recruited to kinetochores by PLK1 during early mitosis and regulates the maturation of the outer kinetochores and microtubule attachment. Has no protein kinase activity in vitro. This chain is Inactive serine/threonine-protein kinase TEX14 (Tex14), found in Mus musculus (Mouse).